The following is a 333-amino-acid chain: MHKHRKPTEADVTPESLFYQRRRVLKALGISAAALSLPLSAQADLLAWFKGSDKPKAPPGKPLTFSQPTDWKLDLPLTPEDKVTGYNNFYEFGLDKADPAANAGGLKTDGWTIKIDGDVAKPLTLDIDDLLKRFPLEERIYRFRCVEAWSMVIPWVGFELAKLIKFAEPTSNARYVAFQTLHDPEQMPGQKDRFMGGGLDYPYVEGLRMDEAMNPLALLAVGVYGKTLPPQNGAPIRLVTPWKYGFKNIKSIVHIRLTRERPPCTWNLAAPDEYGFYANVNPHVDHPRWSQATERVIGSGGLLNVERQPTLLFNGYAEQVASLYRGLNLRDNF.

The tat-type signal signal peptide spans 1 to 43; it reads MHKHRKPTEADVTPESLFYQRRRVLKALGISAAALSLPLSAQA. Mo-molybdopterin-binding positions include asparagine 87, 90-91, cysteine 145, threonine 180, asparagine 232, arginine 237, and 248-250; these read YE and NIK.

Belongs to the MsrP family. In terms of assembly, heterodimer of a catalytic subunit (MsrP) and a heme-binding subunit (MsrQ). The cofactor is Mo-molybdopterin. In terms of processing, predicted to be exported by the Tat system. The position of the signal peptide cleavage has not been experimentally proven.

The protein localises to the periplasm. The enzyme catalyses L-methionyl-[protein] + a quinone + H2O = L-methionyl-(S)-S-oxide-[protein] + a quinol. It carries out the reaction L-methionyl-[protein] + a quinone + H2O = L-methionyl-(R)-S-oxide-[protein] + a quinol. Functionally, part of the MsrPQ system that repairs oxidized periplasmic proteins containing methionine sulfoxide residues (Met-O), using respiratory chain electrons. Thus protects these proteins from oxidative-stress damage caused by reactive species of oxygen and chlorine generated by the host defense mechanisms. MsrPQ is essential for the maintenance of envelope integrity under bleach stress, rescuing a wide series of structurally unrelated periplasmic proteins from methionine oxidation. The catalytic subunit MsrP is non-stereospecific, being able to reduce both (R-) and (S-) diastereoisomers of methionine sulfoxide. The chain is Protein-methionine-sulfoxide reductase catalytic subunit MsrP from Pectobacterium atrosepticum (strain SCRI 1043 / ATCC BAA-672) (Erwinia carotovora subsp. atroseptica).